The sequence spans 64 residues: Prokaryotic ubiquitin-like protein Pup (64 aa).

Positions 1–11 are enriched in basic and acidic residues; it reads MAQEQTKRGGG. The tract at residues 1-37 is disordered; that stretch reads MAQEQTKRGGGGDDEDDFASSTAAGQERREKLAEDTD. The ARC ATPase binding stretch occupies residues 21-58; the sequence is STAAGQERREKLAEDTDDLLDEIDDVLEENAEDFVRAY. The stretch at 24–52 forms a coiled coil; sequence AGQERREKLAEDTDDLLDEIDDVLEENAE. Residue Gln-64 is modified to Deamidated glutamine. Residue Gln-64 forms an Isoglutamyl lysine isopeptide (Gln-Lys) (interchain with K-? in acceptor proteins) linkage.

This sequence belongs to the prokaryotic ubiquitin-like protein family. Strongly interacts with the proteasome-associated ATPase ARC through a hydrophobic interface; the interacting region of Pup lies in its C-terminal half. There is one Pup binding site per ARC hexamer ring. Post-translationally, is modified by deamidation of its C-terminal glutamine to glutamate by the deamidase Dop, a prerequisite to the subsequent pupylation process.

It participates in protein degradation; proteasomal Pup-dependent pathway. Functionally, protein modifier that is covalently attached to lysine residues of substrate proteins, thereby targeting them for proteasomal degradation. The tagging system is termed pupylation. This is Prokaryotic ubiquitin-like protein Pup from Mycolicibacterium paratuberculosis (strain ATCC BAA-968 / K-10) (Mycobacterium paratuberculosis).